Consider the following 120-residue polypeptide: Seripauperin-4 (120 aa).

A helical transmembrane segment spans residues 7-24; sequence IAAGVAAIAATASATTTI.

This sequence belongs to the SRP1/TIP1 family. Seripauperin subfamily.

Its subcellular location is the membrane. This Saccharomyces cerevisiae (strain ATCC 204508 / S288c) (Baker's yeast) protein is Seripauperin-4 (PAU4).